Consider the following 128-residue polypeptide: Small ribosomal subunit protein uS12 (128 aa).

Residues 1–24 (MPTFNQLVKYGREKRKKKSKAPAL) are disordered. Aspartate 89 bears the 3-methylthioaspartic acid mark. The interval 105 to 128 (AGVEGRRQSRSKYGTKRPKEEKGG) is disordered.

It belongs to the universal ribosomal protein uS12 family. Part of the 30S ribosomal subunit. Contacts proteins S8 and S17. May interact with IF1 in the 30S initiation complex.

Functionally, with S4 and S5 plays an important role in translational accuracy. Interacts with and stabilizes bases of the 16S rRNA that are involved in tRNA selection in the A site and with the mRNA backbone. Located at the interface of the 30S and 50S subunits, it traverses the body of the 30S subunit contacting proteins on the other side and probably holding the rRNA structure together. The combined cluster of proteins S8, S12 and S17 appears to hold together the shoulder and platform of the 30S subunit. The chain is Small ribosomal subunit protein uS12 from Aquifex aeolicus (strain VF5).